Here is a 30-residue protein sequence, read N- to C-terminus: Cyclotide cter-P (30 aa).

A cross-link (cyclopeptide (Gly-Asn)) is located at residues 1-30; sequence GIPCGESCVFIPCITAAIGCSCKSKVCYRN. Disulfide bonds link Cys4–Cys20, Cys8–Cys22, and Cys13–Cys27.

This is a cyclic peptide.

The protein resides in the secreted. Its function is as follows. Probably participates in a plant defense mechanism. This is Cyclotide cter-P from Clitoria ternatea (Butterfly pea).